The primary structure comprises 507 residues: Monoogygenase CPUR_05431 (507 aa).

The protein belongs to the PheA/TfdB FAD monooxygenase family. FAD is required as a cofactor.

It participates in pigment biosynthesis. Monoogygenase; part of the ergochrome gene cluster responsible for the typical purple-black color of the ergot sclerotia. The ergochrome gene cluster produces several ergot pigments including the yellow ergochrome secalonic acid and its derivatives, as well as the red anthraquinones endocrocin and clavorubin. The pathway begins with the synthesis of atrochrysone thioester by the polyketide synthase (PKS) CPUR_05437. The atrochrysone carboxyl ACP thioesterase CPUR_05436 then breaks the thioester bond and releases the atrochrysone carboxylic acid from CPUR_05437. The atrochrysone carboxylic acid is then converted to atrochrysone which is further transformed into emodin anthrone. The next step is performed by the anthrone oxygenase CPUR_05434 that catalyzes the oxidation of emodinanthrone to emodin. Emodin is further modified to yield monodictyphenone via several steps involving CPUR_05427, CPUR_05428, CPUR_05429 and CPUR_05430. The short chain dehydrogenase/reductase CPUR_05418 then catalyzes the C-5 ketoreduction to give the xanthone skeleton of the monomeric units. Ergochromes formation requires further dimerization steps of different xanthone units, probably catalyzed by the cytochrome P450 monooxygenase CPUR_05419. CPUR_05425, CPUR_05426 and CPUR_05431 are unique to Claviceps, thus it is likely that they are involved in further modification of xanthone units or in their dimerization. The yellow ergochromes and the red anthraquinone pigments endocrocin and clavorubin are products from the same PKS derived precursors and the latter are likely shunt products in the pathway of xanthone biosynthesis. It is proposed that atrochrysone carboxylic acid released from the PKS CPUR_05437 can also be converted to endocrocin anthrone which is further oxidized into endocrocin by CPUR_05435. Endocrocin could be then modified to clavorubin, possibly by CPUR_05423 and CPUR_05431. Clavorubin is the principal anthraquinone metabolite produced by the cluster with a much higher yield compared to endocrocin. The chain is Monoogygenase CPUR_05431 from Claviceps purpurea (strain 20.1) (Ergot fungus).